We begin with the raw amino-acid sequence, 131 residues long: Antiholin (131 aa).

The Periplasmic portion of the chain corresponds to 1 to 15 (MTMIAWMQHFLETDE). Cytoplasmic-side segments run 1 to 52 (MTMI…SSFK) and 39 to 50 (FAKLNPNIKFSS). The helical transmembrane segment at 16–38 (TKLIYWLTFLMVCMVVDTVLGVL) threads the bilayer. A helical transmembrane segment spans residues 53-75 (IKTGVLIKVSEMILALLAVPFAV). The Periplasmic portion of the chain corresponds to 76-78 (PFP). A helical membrane pass occupies residues 79-101 (AGLPLLYTVYTALCVSEIYSIFG). The Cytoplasmic segment spans residues 102-131 (HLRLVDDKSDFLEILENFFKRTSGKNKEDK).

The protein belongs to the bacteriophage holin family. phi29likevirus holin subfamily. Homomultimer. Interacts with isoform Antiholin; this interaction blocks the holin homomultimerization and delays host cell lysis.

The protein resides in the host cell inner membrane. Functionally, accumulates harmlessly in the cytoplasmic membrane until it reaches a critical concentration that triggers the formation of micron-scale pores (holes) causing host cell membrane disruption and endolysin escape into the periplasmic space. Determines the precise timing of host cell lysis. Participates with the endolysin and spanin proteins in the sequential events which lead to the programmed host cell lysis releasing the mature viral particles from the host cell. Counteracts the aggregation of the holin molecules and thus of pore formation. This is Antiholin (14) from Bacillus subtilis (Bacteriophage PZA).